The chain runs to 443 residues: Mevalonate kinase (443 aa).

Residues Lys12, Ser138, and Gly143–Ser149 contribute to the ATP site. Mg(2+)-binding residues include Ser149 and Glu191. The active-site Proton acceptor is the Asp202.

The protein belongs to the GHMP kinase family. Mevalonate kinase subfamily. Homodimer. The cofactor is Mg(2+).

The protein localises to the cytoplasm. It is found in the cytosol. The catalysed reaction is (R)-mevalonate + ATP = (R)-5-phosphomevalonate + ADP + H(+). The protein operates within isoprenoid biosynthesis; isopentenyl diphosphate biosynthesis via mevalonate pathway; isopentenyl diphosphate from (R)-mevalonate: step 1/3. Farnesyl pyrophosphate and geranyl pyrophosphate inhibit mevalonate kinase by binding competitively at the ATP-binding site. Functionally, mevalonate kinase; part of the second module of ergosterol biosynthesis pathway that includes the middle steps of the pathway. ERG12 converts mevalonate into 5-phosphomevalonate. The second module is carried out in the vacuole and involves the formation of farnesyl diphosphate, which is also an important intermediate in the biosynthesis of ubiquinone, dolichol, heme and prenylated proteins. Activity by the mevalonate kinase ERG12 first converts mevalonate into 5-phosphomevalonate. 5-phosphomevalonate is then further converted to 5-diphosphomevalonate by the phosphomevalonate kinase ERG8. The diphosphomevalonate decarboxylase MVD1/ERG19 then produces isopentenyl diphosphate. The isopentenyl-diphosphate delta-isomerase IDI1 then catalyzes the 1,3-allylic rearrangement of the homoallylic substrate isopentenyl (IPP) to its highly electrophilic allylic isomer, dimethylallyl diphosphate (DMAPP). Finally the farnesyl diphosphate synthase ERG20 catalyzes the sequential condensation of isopentenyl pyrophosphate with dimethylallyl pyrophosphate, and then with the resultant geranylpyrophosphate to the ultimate product farnesyl pyrophosphate. This Saccharomyces cerevisiae (strain ATCC 204508 / S288c) (Baker's yeast) protein is Mevalonate kinase.